The following is a 390-amino-acid chain: MRKMLAAVSRVLSGASQKPASRVLVASRNFANDATFEIKKCDLHRLEEGPPVTTVLTREDGLKYYRMMQTVRRMELKADQLYKQKIIRGFCHLCDGQEACCVGLEAGINPTDHLITAYRAHGFTFTRGLSVREILAELTGRKGGCAKGKGGSMHMYAKNFYGGNGIVGAQVPLGAGIALACKYNGKDEVCLTLYGDGAANQGQIFEAYNMAALWKLPCIFICENNRYGMGTSVERAAASTDYYKRGDFIPGLRVDGMDILCVREATRFAAAYCRSGKGPILMELQTYRYHGHSMSGPGVSYRTREEIQEVRSKSDPIMLLKDRMVNSNLASVEELKEIDVEVRKEIEDAAQFATADPEPPLEELGYHIYSSDPPFEVRGANQWIKFKSVS.

A mitochondrion-targeting transit peptide spans 1–29 (MRKMLAAVSRVLSGASQKPASRVLVASRN). K63 carries the N6-acetyllysine; alternate modification. The residue at position 63 (K63) is an N6-succinyllysine; alternate. Residues H92, Y118, R119, A157, G165, V167, D196, G197, A198, N225, and Y227 each coordinate pyruvate. Residues Y118 and R119 each contribute to the thiamine diphosphate site. Thiamine diphosphate contacts are provided by G165, V167, D196, G197, A198, and N225. D196 lines the Mg(2+) pocket. Mg(2+) contacts are provided by N225 and Y227. Phosphoserine; by PDK1 is present on S232. K244 is subject to N6-acetyllysine; alternate. K244 carries the N6-succinyllysine; alternate modification. Position 277 is an N6-succinyllysine (K277). H292 contacts thiamine diphosphate. S293 bears the Phosphoserine; by PDK1, PDK2, PDK3 and PDK4 mark. The residue at position 295 (S295) is a Phosphoserine. S300 carries the post-translational modification Phosphoserine; by PDK1, PDK2, PDK3 and PDK4. Y301 carries the phosphotyrosine modification. K313 carries the N6-acetyllysine; alternate modification. N6-succinyllysine; alternate is present on K313. K321 and K336 each carry N6-acetyllysine. K385 carries the N6-succinyllysine modification.

Heterotetramer of two PDHA1 and two PDHB subunits. The heterotetramer interacts with DLAT, and is part of the multimeric pyruvate dehydrogenase complex that contains multiple copies of pyruvate dehydrogenase (E1), dihydrolipoamide acetyltransferase (DLAT, E2) and lipoamide dehydrogenase (DLD, E3). These subunits are bound to an inner core composed of about 48 DLAT and 12 PDHX molecules. Thiamine diphosphate serves as cofactor. Mg(2+) is required as a cofactor. In terms of processing, phosphorylation at Ser-232, Ser-293 and Ser-300 by PDK family kinases inactivates the enzyme; for this phosphorylation at a single site is sufficient. Phosphorylation at Ser-293 interferes with access to active site, and thereby inactivates the enzyme. Dephosphorylation at all three sites, i.e. at Ser-232, Ser-293 and Ser-300, is required for reactivation. Acetylation alters the phosphorylation pattern. Deacetylated by SIRT3.

Its subcellular location is the mitochondrion matrix. It carries out the reaction N(6)-[(R)-lipoyl]-L-lysyl-[protein] + pyruvate + H(+) = N(6)-[(R)-S(8)-acetyldihydrolipoyl]-L-lysyl-[protein] + CO2. Pyruvate dehydrogenase activity is inhibited by phosphorylation of PDHA1; it is reactivated by dephosphorylation. Functionally, the pyruvate dehydrogenase complex catalyzes the overall conversion of pyruvate to acetyl-CoA and CO(2), and thereby links the glycolytic pathway to the tricarboxylic cycle. The protein is Pyruvate dehydrogenase E1 component subunit alpha, somatic form, mitochondrial (PDHA1) of Pan troglodytes (Chimpanzee).